A 556-amino-acid polypeptide reads, in one-letter code: Cholesterol oxidase (556 aa).

G18, E37, G88, A93, and V235 together coordinate FAD. H471 acts as the Proton acceptor in catalysis. G504 is an FAD binding site.

Belongs to the GMC oxidoreductase family. The cofactor is FAD.

The catalysed reaction is cholesterol + O2 = cholest-5-en-3-one + H2O2. The enzyme catalyses cholest-5-en-3-one = cholest-4-en-3-one. It functions in the pathway steroid metabolism; cholesterol degradation. Functionally, bifunctional enzyme that catalyzes the oxidation and isomerization of cholesterol to cholestenone (cholest-4-en-3-one), an initial step in the cholesterol degradation process. In Acinetobacter baumannii, this protein is Cholesterol oxidase.